A 577-amino-acid polypeptide reads, in one-letter code: Anthranilate synthase alpha subunit 1, chloroplastic (577 aa).

The N-terminal 34 residues, Met-1–Arg-34, are a transit peptide targeting the chloroplast.

This sequence belongs to the anthranilate synthase component I family. In terms of assembly, heterotetramer consisting of two non-identical subunits: a beta subunit and a large alpha subunit.

It is found in the plastid. The protein localises to the chloroplast. The enzyme catalyses chorismate + L-glutamine = anthranilate + pyruvate + L-glutamate + H(+). Its pathway is amino-acid biosynthesis; L-tryptophan biosynthesis; L-tryptophan from chorismate: step 1/5. With respect to regulation, feedback inhibition by tryptophan. Part of a heterotetrameric complex that catalyzes the two-step biosynthesis of anthranilate, an intermediate in the biosynthesis of L-tryptophan. In the first step, the glutamine-binding beta subunit of anthranilate synthase (AS) provides the glutamine amidotransferase activity which generates ammonia as a substrate that, along with chorismate, is used in the second step, catalyzed by the large alpha subunit of AS to produce anthranilate. The sequence is that of Anthranilate synthase alpha subunit 1, chloroplastic from Oryza sativa subsp. japonica (Rice).